The primary structure comprises 426 residues: Enolase (426 aa).

Glutamine 165 serves as a coordination point for (2R)-2-phosphoglycerate. Glutamate 207 serves as the catalytic Proton donor. Mg(2+) is bound by residues aspartate 244, glutamate 285, and aspartate 312. Positions 337, 366, 367, and 388 each coordinate (2R)-2-phosphoglycerate. The active-site Proton acceptor is the lysine 337.

The protein belongs to the enolase family. Mg(2+) is required as a cofactor.

The protein resides in the cytoplasm. It is found in the secreted. It localises to the cell surface. The enzyme catalyses (2R)-2-phosphoglycerate = phosphoenolpyruvate + H2O. It functions in the pathway carbohydrate degradation; glycolysis; pyruvate from D-glyceraldehyde 3-phosphate: step 4/5. Functionally, catalyzes the reversible conversion of 2-phosphoglycerate (2-PG) into phosphoenolpyruvate (PEP). It is essential for the degradation of carbohydrates via glycolysis. This is Enolase from Thermosynechococcus vestitus (strain NIES-2133 / IAM M-273 / BP-1).